Here is a 141-residue protein sequence, read N- to C-terminus: Protein nfe1 (141 aa).

The protein to the N-terminal of nitrogenase iron protein (NifH). Has lost the ATP-binding site.

In terms of biological role, responsible for the nodulation efficiency and competitive ability of strain GR4 on alfalfa roots. This Rhizobium meliloti (Ensifer meliloti) protein is Protein nfe1 (nfe1).